Reading from the N-terminus, the 419-residue chain is E3 ubiquitin-protein ligase RNF130 (419 aa).

The N-terminal stretch at 1 to 27 (MSGAARAGPARLAALALLTCSLWPTRA) is a signal peptide. The Extracellular segment spans residues 28-194 (DNASQEYYTA…MPPKNFSRGS (167 aa)). Residues Asn-29, Asn-40, Asn-112, Asn-135, Asn-172, and Asn-189 are each glycosylated (N-linked (GlcNAc...) asparagine). The 72-residue stretch at 105 to 176 (IALLQRGNCT…SYLEKNISVQ (72 aa)) folds into the PA domain. A helical transmembrane segment spans residues 195–217 (LVFVSISFIVLMIISSAWLIFYF). Over 218–419 (IQKIRYTNAR…SLNANEVEWF (202 aa)) the chain is Cytoplasmic. The RING-type zinc-finger motif lies at 264 to 305 (CAVCIESYKQNDVVRVLPCKHVFHKSCVDPWLSEHCTCPMCK). A Phosphoserine modification is found at Ser-341.

In terms of tissue distribution, in testis sections, expressed in interstitial tissue and seminiferous tubules. In tubules, expression is mainly in postmeiotic germ cells and to a much lesser extent in Sertoli cells (at protein level). Expressed at high levels in liver, lung, stomach, heart and thymus.

Its subcellular location is the membrane. The protein localises to the cytoplasm. It catalyses the reaction S-ubiquitinyl-[E2 ubiquitin-conjugating enzyme]-L-cysteine + [acceptor protein]-L-lysine = [E2 ubiquitin-conjugating enzyme]-L-cysteine + N(6)-ubiquitinyl-[acceptor protein]-L-lysine.. The protein operates within protein modification; protein ubiquitination. In terms of biological role, acts as an E3 ubiquitin-protein ligase. May have a role during the programmed cell death of hematopoietic cells. The polypeptide is E3 ubiquitin-protein ligase RNF130 (Rattus norvegicus (Rat)).